The chain runs to 552 residues: MAGUK p55 subfamily member 2 (552 aa).

2 L27 domains span residues 8 to 59 (SESA…EETK) and 60 to 118 (LEAV…YETP). Ser42 carries the phosphoserine modification. Phosphothreonine is present on Thr117. Phosphoserine is present on Ser121. A PDZ domain is found at 140-219 (MVGIRKTAGE…SVILKILPSY (80 aa)). Positions 225-293 (PRQVFVKCHF…PSQLLEEKRK (69 aa)) constitute an SH3 domain. The region spanning 350 to 537 (RKTLVLIGAQ…TFRELQTAME (188 aa)) is the Guanylate kinase-like domain.

It belongs to the MAGUK family. Can homomultimerise. Interacts with CACNG2. Interacts (via the SH3-Guanylate kinase-like sub-module) with DLG4/PSD95 and DLGAP1/GKAP. Interacts (via the PDZ domain) with CADM1 (via C-terminus). Interacts with KCNN2/SK2 (via N-terminal domain). Interacts with SRC. Phosphorylated by SRC. In terms of tissue distribution, expressed in hippocampal neurons.

Its subcellular location is the cell projection. It is found in the dendrite. The protein localises to the postsynaptic density. It localises to the cytoplasm. The protein resides in the cytoskeleton. Its subcellular location is the membrane. Its function is as follows. Postsynaptic MAGUK scaffold protein that links CADM1 cell adhesion molecules to core components of the postsynaptic density. In CA1 pyramidal neurons, required for synaptic KCNN2-containing channel function and long-term potentiation expression. Seems to negatively regulate SRC function in epithelial cells. The polypeptide is MAGUK p55 subfamily member 2 (Rattus norvegicus (Rat)).